The following is a 278-amino-acid chain: Manganese import system permease protein ScaB (278 aa).

8 helical membrane passes run 18–38 (ALITAIAIGIVAGAVGCFIIL), 40–60 (GMSLMGDAISHAVLPGVALSF), 61–81 (ILGINFFIGAIAFGLLASILI), 136–156 (VTIGVGVAVLLVIVLLFRPLL), 172–192 (VKLYHYLLMVLLTLVSVTAMQ), 194–214 (VGTILIAAMLITPAATAYLYA), 220–240 (MMLLSSGLGALASILGLFIGY), and 244–264 (IAVGSCIVLTSAIFFLISFFI).

It belongs to the ABC-3 integral membrane protein family.

Its subcellular location is the cell membrane. Its function is as follows. Part of an ABC transporter complex involved in manganese import. This Streptococcus pneumoniae protein is Manganese import system permease protein ScaB.